A 266-amino-acid chain; its full sequence is Undecaprenyl-diphosphatase (266 aa).

The next 8 membrane-spanning stretches (helical) occupy residues 4–24 (WLIA…PVSS), 46–66 (VLIQ…RLWG), 82–102 (IGIL…HDFI), 105–125 (VLYE…FILL), 142–162 (YPLK…VPGV), 182–202 (AAEF…AYDL), 216–236 (LIGI…KTVL), and 244–264 (FAPF…LLYI).

It belongs to the UppP family.

The protein localises to the cell inner membrane. It catalyses the reaction di-trans,octa-cis-undecaprenyl diphosphate + H2O = di-trans,octa-cis-undecaprenyl phosphate + phosphate + H(+). Functionally, catalyzes the dephosphorylation of undecaprenyl diphosphate (UPP). Confers resistance to bacitracin. This Caulobacter vibrioides (strain ATCC 19089 / CIP 103742 / CB 15) (Caulobacter crescentus) protein is Undecaprenyl-diphosphatase.